Consider the following 527-residue polypeptide: UDP-glucuronosyltransferase 2A1 (527 aa).

The signal sequence occupies residues 1 to 20 (MLNNLLLFSLQISLIGTTLG). The Lumenal segment spans residues 21–491 (GNVLIWPMEG…TWFQYHSLDV (471 aa)). N-linked (GlcNAc...) asparagine glycosylation is found at asparagine 49, leucine 313, and asparagine 347. The helical transmembrane segment at 492–512 (IGFLLVCVTTAIFLVIQCCLF) threads the bilayer. The Cytoplasmic segment spans residues 513–527 (SCQKFGKIGKKKKRE).

This sequence belongs to the UDP-glycosyltransferase family. As to expression, olfactory epithelium, brain and fetal lung. Not present in liver.

The protein resides in the membrane. The protein localises to the endoplasmic reticulum membrane. The catalysed reaction is glucuronate acceptor + UDP-alpha-D-glucuronate = acceptor beta-D-glucuronoside + UDP + H(+). It catalyses the reaction 16beta,17beta-estriol + UDP-alpha-D-glucuronate = 16beta,17beta-estriol 16-O-(beta-D-glucuronate) + UDP + H(+). It carries out the reaction 16alpha,17alpha-estriol + UDP-alpha-D-glucuronate = 16alpha,17alpha-estriol 16-O-(beta-D-glucuronate) + UDP + H(+). The enzyme catalyses 17alpha-estradiol + UDP-alpha-D-glucuronate = 17alpha-estradiol 17-O-(beta-D-glucuronate) + UDP + H(+). The catalysed reaction is 17alpha-estradiol + UDP-alpha-D-glucuronate = 17alpha-estradiol 3-O-(beta-D-glucuronate) + UDP + H(+). It catalyses the reaction 17beta-estradiol + UDP-alpha-D-glucuronate = 17beta-estradiol 3-O-(beta-D-glucuronate) + UDP + H(+). It carries out the reaction 17beta-estradiol + UDP-alpha-D-glucuronate = 17beta-estradiol 17-O-(beta-D-glucuronate) + UDP + H(+). The enzyme catalyses testosterone + UDP-alpha-D-glucuronate = testosterone 17-O-(beta-D-glucuronate) + UDP + H(+). The catalysed reaction is epitestosterone + UDP-alpha-D-glucuronate = epitestosterone 17-O-(beta-D-glucuronate) + UDP + H(+). It catalyses the reaction lithocholate + UDP-alpha-D-glucuronate = lithocholoyl-3-O-(beta-D-glucuronate) + UDP + H(+). It carries out the reaction lithocholate + UDP-alpha-D-glucuronate = lithocholoyl-24-O-(beta-D-glucuronate) + UDP. The enzyme catalyses deoxycholate + UDP-alpha-D-glucuronate = deoxycholoyl-24-O-(beta-D-glucuronate) + UDP. The catalysed reaction is hyodeoxycholate + UDP-alpha-D-glucuronate = hyodeoxycholoyl-24-O-(beta-D-glucuronate) + UDP. It catalyses the reaction hyocholate + UDP-alpha-D-glucuronate = hyocholoyl-24-O-(beta-D-glucuronate) + UDP. In terms of biological role, UDP-glucuronosyltransferase (UGT) that catalyzes phase II biotransformation reactions in which lipophilic substrates are conjugated with glucuronic acid to increase the metabolite's water solubility, thereby facilitating excretion into either the urine or bile. Essential for the elimination and detoxification of drugs, xenobiotics and endogenous compounds. Catalyzes the glucuronidation of endogenous steroid hormones such as androgens (testosterone and epitestosterone) and estrogens (estradiol and epiestriol). Contributes to bile acid (BA) detoxification by catalyzing the glucuronidation of BA substrates, which are natural detergents for dietary lipids absorption. Shows a high affinity to aliphatic odorants such as citronellol as well as olfactory tissue specificity, and therefore may be involved in olfaction. Shows a potential role in detoxification of toxic waste compounds in the amniotic fluid before birth, and air-born chemical after birth. This Homo sapiens (Human) protein is UDP-glucuronosyltransferase 2A1.